Consider the following 207-residue polypeptide: MGKCSGRCTLVAFCCLQLVAALERQIFDFLGYQWAPILANFLHIMAVILGIFGTVQYRSRYLILYAAWLVLWVGWNAFIICFYLEVGQLSQDRDFIMTFNTSLHRSWWMENGPGCLVTPVLNSRLALEDHHVISVTGCLLDYPYIEALSSALQIFLALFGFVFACYVSKVFLEEEDSFDFIGGFDSYGYQAPQKTSHLQLQPLYTSG.

The N-terminal stretch at Met1–Ala21 is a signal peptide. At Leu22–Trp34 the chain is on the extracellular side. Residues Ala35–Val55 form a helical membrane-spanning segment. Residues Gln56–Tyr61 are Cytoplasmic-facing. Residues Leu62–Phe82 traverse the membrane as a helical segment. Residues Tyr83 to Glu146 are Extracellular-facing. Residue Asn100 is glycosylated (N-linked (GlcNAc...) asparagine). A helical membrane pass occupies residues Ala147 to Val167. At Ser168–Gly207 the chain is on the cytoplasmic side.

It belongs to the NKAIN family. As to quaternary structure, interacts with ATP1B1 C-terminus.

It is found in the cell membrane. The polypeptide is Sodium/potassium-transporting ATPase subunit beta-1-interacting protein 1 (NKAIN1) (Homo sapiens (Human)).